We begin with the raw amino-acid sequence, 623 residues long: Peptide transporter PTR2 (623 aa).

2 disordered regions span residues 1-20 (MVSS…VLTD) and 31-58 (DYED…TPQE). 11 consecutive transmembrane segments (helical) span residues 134–154 (ALTN…GYLG), 163–183 (AIQW…FASI), 191–211 (NAGL…SGLM), 250–270 (ITNV…ATSY), 277–297 (FWLA…FLFI), 385–405 (IIFN…IGAM), 418–438 (FNPL…YPLL), 448–468 (IWRI…GFVL), 499–519 (LFIL…ELAY), 529–549 (LVYA…LAIT), and 557–577 (LHWV…VMLA).

The protein belongs to the major facilitator superfamily. Proton-dependent oligopeptide transporter (POT/PTR) (TC 2.A.17) family.

Its subcellular location is the membrane. Functionally, uptake of small peptides. The sequence is that of Peptide transporter PTR2 (PTR2) from Candida albicans (Yeast).